The sequence spans 287 residues: 4-hydroxybenzoate octaprenyltransferase (287 aa).

Helical transmembrane passes span 23 to 40, 99 to 119, 141 to 161, 163 to 183, 213 to 233, 235 to 255, and 266 to 286; these read IGSL…WLAG, LFVV…TMTI, LPQF…YAAV, ESLP…TVAY, LIIG…GTMT, LGMP…YQQI, and FKAF…VLFG.

This sequence belongs to the UbiA prenyltransferase family. Mg(2+) serves as cofactor.

It is found in the cell inner membrane. It catalyses the reaction all-trans-octaprenyl diphosphate + 4-hydroxybenzoate = 4-hydroxy-3-(all-trans-octaprenyl)benzoate + diphosphate. Its pathway is cofactor biosynthesis; ubiquinone biosynthesis. Functionally, catalyzes the prenylation of para-hydroxybenzoate (PHB) with an all-trans polyprenyl group. Mediates the second step in the final reaction sequence of ubiquinone-8 (UQ-8) biosynthesis, which is the condensation of the polyisoprenoid side chain with PHB, generating the first membrane-bound Q intermediate 3-octaprenyl-4-hydroxybenzoate. This Pectobacterium carotovorum subsp. carotovorum (strain PC1) protein is 4-hydroxybenzoate octaprenyltransferase.